The following is a 93-amino-acid chain: U8-theraphotoxin-Hs1b (93 aa).

The N-terminal stretch at 1–18 is a signal peptide; it reads MKAILLLAIFSVLTVAIC. 4 disulfides stabilise this stretch: cysteine 40–cysteine 54, cysteine 40–cysteine 81, cysteine 53–cysteine 66, and cysteine 84–cysteine 91.

Belongs to the neurotoxin 27 (Jztx-72) family. ICK-72 subfamily. As to expression, expressed by the venom gland.

The protein localises to the secreted. In terms of biological role, probable neurotoxin with ion channel impairing activity. This is U8-theraphotoxin-Hs1b from Cyriopagopus schmidti (Chinese bird spider).